Reading from the N-terminus, the 251-residue chain is Mast cell protease 3 (251 aa).

A signal peptide spans 1 to 17 (MVLFLLLVALLSPAGEA). A propeptide spans 18-19 (GK) (activation peptide). The Peptidase S1 domain occupies 20–243 (IIGGHEAKPH…FLSWIQRTMR (224 aa)). A disulfide bridge links Cys-48 with Cys-64. The active-site Charge relay system is the His-63. Residue Asn-70 is glycosylated (N-linked (GlcNAc...) asparagine). Asp-107 serves as the catalytic Charge relay system. Intrachain disulfides connect Cys-141–Cys-207 and Cys-172–Cys-186. The active-site Charge relay system is the Ser-201.

This sequence belongs to the peptidase S1 family. Granzyme subfamily.

The protein localises to the secreted. It localises to the cytoplasmic granule. The chain is Mast cell protease 3 from Ovis aries (Sheep).